The chain runs to 344 residues: tRNA N6-adenosine threonylcarbamoyltransferase (344 aa).

Residues His111 and His115 each coordinate Fe cation. Substrate is bound by residues 133 to 137 (VVSGG), Asp166, Gly179, Asp183, and Asn270. Asp298 lines the Fe cation pocket.

It belongs to the KAE1 / TsaD family. Fe(2+) is required as a cofactor.

The protein localises to the cytoplasm. It catalyses the reaction L-threonylcarbamoyladenylate + adenosine(37) in tRNA = N(6)-L-threonylcarbamoyladenosine(37) in tRNA + AMP + H(+). Functionally, required for the formation of a threonylcarbamoyl group on adenosine at position 37 (t(6)A37) in tRNAs that read codons beginning with adenine. Is involved in the transfer of the threonylcarbamoyl moiety of threonylcarbamoyl-AMP (TC-AMP) to the N6 group of A37, together with TsaE and TsaB. TsaD likely plays a direct catalytic role in this reaction. This Persephonella marina (strain DSM 14350 / EX-H1) protein is tRNA N6-adenosine threonylcarbamoyltransferase.